Consider the following 903-residue polypeptide: Protein translocase subunit SecA (903 aa).

ATP contacts are provided by residues Gln87, 105-109, and Asp507; that span reads GEGKT. Disordered regions lie at residues 565 to 584 and 855 to 877; these read ESRR…GDPG and AEPG…LASQ. Zn(2+) is bound by residues Cys887, Cys889, Cys898, and His899.

Belongs to the SecA family. As to quaternary structure, monomer and homodimer. Part of the essential Sec protein translocation apparatus which comprises SecA, SecYEG and auxiliary proteins SecDF-YajC and YidC. Zn(2+) is required as a cofactor.

The protein localises to the cell inner membrane. It localises to the cytoplasm. It carries out the reaction ATP + H2O + cellular proteinSide 1 = ADP + phosphate + cellular proteinSide 2.. Its function is as follows. Part of the Sec protein translocase complex. Interacts with the SecYEG preprotein conducting channel. Has a central role in coupling the hydrolysis of ATP to the transfer of proteins into and across the cell membrane, serving both as a receptor for the preprotein-SecB complex and as an ATP-driven molecular motor driving the stepwise translocation of polypeptide chains across the membrane. This Chromobacterium violaceum (strain ATCC 12472 / DSM 30191 / JCM 1249 / CCUG 213 / NBRC 12614 / NCIMB 9131 / NCTC 9757 / MK) protein is Protein translocase subunit SecA.